A 522-amino-acid chain; its full sequence is MSLSFLLRVAGLFFLQFNSAQAKSQVHEQWHVSSIPNVPAGYTGSLHSGYLNLTDKLEGDLFFTLYGSENEVHQNRTIIWLNGGPGCSSEDGSMLELGPLRLTNDSLVYYNAASWVRLGNVLFVDQPMGTGFSFADTRDAILNDNEKMSNDFAYFLQEFVKAFPEYATDTWYIAGESFAGQYIPAIAKKVIDSDIVNLSGIAIGNGWIEPASHYLTYLDYLVERGLLERGSALFEALTAVQAKCLMSLEQSASGMLEDENSCDKYLFDILFSVSDKSGEFCFNMYDVTLTSPYPSCGMEWPLELPALTDFLSSPDVMKALHVASDKVSRWEECSSLVSNFYADTNVFRTRFTIAELLEEIPVMLFYGENDFLCNYVSGEFLISNLEWSGKRGFENASNADWYPRYSEANTLEYGQYAAAAGIIHSERNLTYATIRNSSHMVPYDHPYEMLALVSAFFDNDFSQILMLPDPVTIVPNHSFLSIFLWVMAGILAFSAIGAICYYSYRHIRSRYDSYTPIQEESA.

A signal peptide spans 1–22 (MSLSFLLRVAGLFFLQFNSAQA). Topologically, residues 23–478 (KSQVHEQWHV…DPVTIVPNHS (456 aa)) are lumenal. Residues Asn52, Asn75, and Asn104 are each glycosylated (N-linked (GlcNAc...) asparagine). Residue Ser177 is part of the active site. Residue Asn197 is glycosylated (N-linked (GlcNAc...) asparagine). The active site involves Asp370. Asn395, Asn428, and Asn436 each carry an N-linked (GlcNAc...) asparagine glycan. The active site involves His439. Residues 479-499 (FLSIFLWVMAGILAFSAIGAI) traverse the membrane as a helical segment. Topologically, residues 500 to 522 (CYYSYRHIRSRYDSYTPIQEESA) are cytoplasmic.

This sequence belongs to the peptidase S10 family.

The protein localises to the golgi apparatus. Its subcellular location is the trans-Golgi network membrane. The enzyme catalyses Preferential release of a C-terminal arginine or lysine residue.. Protease with a carboxypeptidase B-like function involved in the C-terminal processing of the lysine and arginine residues from protein precursors. Promotes cell fusion and is involved in the programmed cell death. This Schizosaccharomyces japonicus (strain yFS275 / FY16936) (Fission yeast) protein is Pheromone-processing carboxypeptidase kex1 (kex1).